The primary structure comprises 620 residues: Sterile alpha motif domain-containing protein 15 (620 aa).

Residues 1–394 (MSEVSGDYNS…PNYPAGKDKL (394 aa)) form a disordered region. Composition is skewed to basic and acidic residues over residues 62–83 (TRTR…DLQR), 106–125 (IDPE…KSVE), and 135–180 (TKSE…HFKS). Polar residues predominate over residues 181–191 (TEQSGTEQPEQ). The span at 233–242 (RPLKASKKAQ) shows a compositional bias: basic residues. Positions 261–270 (LLDDQEETQE) are enriched in acidic residues. Composition is skewed to basic and acidic residues over residues 271–286 (ESIK…DRKP), 295–315 (KSSE…DKDP), 323–337 (FPKE…KTGD), and 347–382 (IQEK…KPES). Residues 480–543 (WSPERVAEWI…SYHTRVLLGI (64 aa)) form the SAM domain. Residues 594 to 604 (EIKAEEKKEDA) are compositionally biased toward basic and acidic residues. A disordered region spans residues 594-620 (EIKAEEKKEDALPENSLEENEELYEAT). Positions 609-620 (SLEENEELYEAT) are enriched in acidic residues.

The protein is Sterile alpha motif domain-containing protein 15 (Samd15) of Mus musculus (Mouse).